A 214-amino-acid chain; its full sequence is NAD(P)H-quinone oxidoreductase subunit 6, chloroplastic (214 aa).

The next 5 membrane-spanning stretches (helical) occupy residues 10 to 30, 32 to 52, 61 to 81, 102 to 122, and 163 to 183; these read FSLFFLEGAVLVGALGVVLLP, ILYSAFLLGGVLMSIAGIYLL, AQVLIYVGAINVLILFAIMLV, IIGLTCIGLAGFLIDMIVTTP, and LLPFEVISLLLLVTLVGAIVI.

This sequence belongs to the complex I subunit 6 family. In terms of assembly, NDH is composed of at least 16 different subunits, 5 of which are encoded in the nucleus.

It localises to the plastid. It is found in the chloroplast thylakoid membrane. It catalyses the reaction a plastoquinone + NADH + (n+1) H(+)(in) = a plastoquinol + NAD(+) + n H(+)(out). The catalysed reaction is a plastoquinone + NADPH + (n+1) H(+)(in) = a plastoquinol + NADP(+) + n H(+)(out). NDH shuttles electrons from NAD(P)H:plastoquinone, via FMN and iron-sulfur (Fe-S) centers, to quinones in the photosynthetic chain and possibly in a chloroplast respiratory chain. The immediate electron acceptor for the enzyme in this species is believed to be plastoquinone. Couples the redox reaction to proton translocation, and thus conserves the redox energy in a proton gradient. The protein is NAD(P)H-quinone oxidoreductase subunit 6, chloroplastic (ndhG) of Chlorokybus atmophyticus (Soil alga).